Consider the following 262-residue polypeptide: Eukaryotic translation initiation factor 3 subunit G (262 aa).

One can recognise an RRM domain in the interval Asn182–Pro260.

This sequence belongs to the eIF-3 subunit G family. As to quaternary structure, component of the eukaryotic translation initiation factor 3 (eIF-3) complex.

Its subcellular location is the cytoplasm. Functionally, RNA-binding component of the eukaryotic translation initiation factor 3 (eIF-3) complex, which is involved in protein synthesis of a specialized repertoire of mRNAs and, together with other initiation factors, stimulates binding of mRNA and methionyl-tRNAi to the 40S ribosome. The eIF-3 complex specifically targets and initiates translation of a subset of mRNAs involved in cell proliferation. This subunit can bind 18S rRNA. Binds to GC-rich 5'UTRs in cholinergic motor neurons, thereby may play a role in translational regulation of mRNAs involved in neuropeptide signaling and stress response, including hlh-30 isoform d and ncs-2. The protein is Eukaryotic translation initiation factor 3 subunit G of Caenorhabditis elegans.